A 377-amino-acid chain; its full sequence is MELKSMDPVEMPIFGSTLKLMKFWSYLFVHNWRRYVAMTPYIIINCTQYVDIYLSTESLDFIIRNVYLAVLFTNTVVRGVLLCVQRFSYERFINILKSFYIELLQSDDPIINILVKETTRLSVLISRINLLMGCCTCIGFVTYPIFGSERVLPYGMYLPTIDEYKYASPYYEIFFVIQAIMAPMGCCMYIPYTNMVVTFTLFAILMCRVLQHKLRSLEKLKNEQVRGEIIWCIKYQLKLSGFVDSMNALNTHLHLVEFLCFGAMLCVLLFSLIIAQTIAQTVIVIAYMVMIFANSVVLYYVANELYFQSFDIAIAAYESNWMDFDVDTQKTLKFLIMRSQKPLAILVGGTYPMNLKMLQSLLNAIYSFFTLLRRVYG.

Residues 1-34 (MELKSMDPVEMPIFGSTLKLMKFWSYLFVHNWRR) are Cytoplasmic-facing. A helical membrane pass occupies residues 35–55 (YVAMTPYIIINCTQYVDIYLS). At 56–65 (TESLDFIIRN) the chain is on the extracellular side. Residues 66–86 (VYLAVLFTNTVVRGVLLCVQR) traverse the membrane as a helical segment. Topologically, residues 87–127 (FSYERFINILKSFYIELLQSDDPIINILVKETTRLSVLISR) are cytoplasmic. Residues 128–148 (INLLMGCCTCIGFVTYPIFGS) form a helical membrane-spanning segment. The Extracellular portion of the chain corresponds to 149-172 (ERVLPYGMYLPTIDEYKYASPYYE). Residues 173–193 (IFFVIQAIMAPMGCCMYIPYT) traverse the membrane as a helical segment. The Cytoplasmic portion of the chain corresponds to 194 to 254 (NMVVTFTLFA…SMNALNTHLH (61 aa)). Residues 255–275 (LVEFLCFGAMLCVLLFSLIIA) form a helical membrane-spanning segment. The Extracellular portion of the chain corresponds to 276 to 280 (QTIAQ). The chain crosses the membrane as a helical span at residues 281–301 (TVIVIAYMVMIFANSVVLYYV). Residues 302 to 344 (ANELYFQSFDIAIAAYESNWMDFDVDTQKTLKFLIMRSQKPLA) are Cytoplasmic-facing. A helical transmembrane segment spans residues 345-365 (ILVGGTYPMNLKMLQSLLNAI). Residues 366 to 377 (YSFFTLLRRVYG) lie on the Extracellular side of the membrane.

It belongs to the insect chemoreceptor superfamily. Heteromeric odorant receptor channel (TC 1.A.69) family. Or30a subfamily. In terms of assembly, interacts with Orco. Complexes exist early in the endomembrane system in olfactory sensory neurons (OSNs), coupling these complexes to the conserved ciliary trafficking pathway.

Its subcellular location is the cell membrane. Its function is as follows. Odorant receptor which mediates acceptance or avoidance behavior, depending on its substrates. The odorant receptor repertoire encodes a large collection of odor stimuli that vary widely in identity, intensity, and duration. May form a complex with Orco to form odorant-sensing units, providing sensitive and prolonged odorant signaling and calcium permeability. Involved in the behavioral responses to propyl acetate and anisole. The polypeptide is Odorant receptor 30a (Or30a) (Drosophila melanogaster (Fruit fly)).